The primary structure comprises 207 residues: Small ribosomal subunit protein uS4 (207 aa).

The tract at residues 31-55 (KCKLDSKPGQHGRTSGARTSDYGTQ) is disordered. Positions 42–53 (GRTSGARTSDYG) are enriched in polar residues. The S4 RNA-binding domain occupies 97–160 (SRLDNVVYRM…KKQARILEAL (64 aa)).

Belongs to the universal ribosomal protein uS4 family. In terms of assembly, part of the 30S ribosomal subunit. Contacts protein S5. The interaction surface between S4 and S5 is involved in control of translational fidelity.

Functionally, one of the primary rRNA binding proteins, it binds directly to 16S rRNA where it nucleates assembly of the body of the 30S subunit. In terms of biological role, with S5 and S12 plays an important role in translational accuracy. The protein is Small ribosomal subunit protein uS4 of Paraburkholderia phymatum (strain DSM 17167 / CIP 108236 / LMG 21445 / STM815) (Burkholderia phymatum).